We begin with the raw amino-acid sequence, 352 residues long: MVFRIASSPYTHNQRQTSRIMLLVLLAAVPGIAAQLWFFGWGTLVQILLASVSALLAEALVLKLRKQSVAATLKDNSALLTGLLLAVSIPPLAPWWMVVLGTVFAVIIAKQLYGGLGQNPFNPAMIGYVVLLISFPVQMTSWLPPHEIAVNIPGFIDAIQVIFSGHITSGGDMNTLRLGIDGISQATPLDTFKTSVRAGHSVEQIMQYPIYSGMLAGVGWQWVNLAWLAGGVWLLWQKAIRWHIPLSFLVTLALCATLGWLFSPETLAAPQIHLLSGATMLGAFFILTDPVTASTTNRGRLIFGALAGLLVWLIRSFGGYPDGVAFAVLLANITVPLIDYYTRPRVYGHRKG.

5 helical membrane passes run 20-40, 42-62, 78-109, 123-143, and 148-168; these read IMLL…WFFG, GTLV…ALVL, ALLT…VIIA, PAMI…TSWL, and IAVN…GHIT. The residue at position 187 (threonine 187) is an FMN phosphoryl threonine. A run of 5 helical transmembrane segments spans residues 215 to 235, 242 to 262, 267 to 287, 301 to 321, and 322 to 342; these read LAGV…VWLL, WHIP…GWLF, LAAP…FFIL, LIFG…GGYP, and DGVA…DYYT.

This sequence belongs to the NqrB/RnfD family. The complex is composed of six subunits: RsxA, RsxB, RsxC, RsxD, RsxE and RsxG. It depends on FMN as a cofactor.

The protein resides in the cell inner membrane. Its function is as follows. Part of a membrane-bound complex that couples electron transfer with translocation of ions across the membrane. Required to maintain the reduced state of SoxR. The chain is Ion-translocating oxidoreductase complex subunit D from Escherichia coli (strain SMS-3-5 / SECEC).